The following is a 371-amino-acid chain: 4-hydroxyprotoasukamycin monooxygenase (371 aa).

Belongs to the bacterial luciferase oxidoreductase family. FMN is required as a cofactor.

The enzyme catalyses 4-hydroxyprotoasukamycin + NADH + O2 + H(+) = asukamycin + NAD(+) + H2O. Its pathway is antibiotic biosynthesis. Its function is as follows. Involved in the biosynthesis of the antibiotic asukamycin. Catalyzes the epoxidation of 4-hydroxyprotoasukamycin to the final product, asukamycin. Can also convert some 4-hydroxyprotoasukamycin derivatives to their asukamycin derivatives, but cannot use protoasukamycin as substrate. Can also use NADPH, but catalytic efficiency is 20-fold higher with NADH. The polypeptide is 4-hydroxyprotoasukamycin monooxygenase (Streptomyces nodosus subsp. asukaensis).